The primary structure comprises 534 residues: Monolignol oxidoreductase AtBBE-like 13 (534 aa).

Positions 1-29 (MAFVLMNNTNAFLVTLLLLSLSYIPLSFS) are cleaved as a signal peptide. Asn-7 and Asn-59 each carry an N-linked (GlcNAc...) asparagine glycan. Cys-38 and Cys-102 are oxidised to a cystine. The segment at residues 117–181 (HDYEGLSYVS…KIHGFPAGLC (65 aa)) is a cross-link (6-(S-cysteinyl)-8alpha-(pros-histidyl)-FAD (His-Cys)).

This sequence belongs to the oxygen-dependent FAD-linked oxidoreductase family. FAD serves as cofactor. In terms of processing, the FAD cofactor is bound via a bicovalent 6-S-cysteinyl, 8alpha-N1-histidyl FAD linkage.

The protein localises to the secreted. It localises to the cell wall. It catalyses the reaction (E)-4-coumaroyl alcohol + A = (E)-4-coumaraldehyde + AH2. It carries out the reaction (E)-coniferol + A = (E)-coniferaldehyde + AH2. The catalysed reaction is (E)-sinapyl alcohol + A = (E)-sinapaldehyde + AH2. It functions in the pathway phenylpropanoid metabolism. Mediates oxidation of p-hydroxylated derivatives of cinnamyl alcohol (i.e. the monolignols p-coumaryl-, coniferyl-, and sinapyl alcohol) to their corresponding aldehydes. The electron acceptor required for these reactions is not known, but does not seem to be dioxygen. Is much less efficient towards cinnamyl alcohol. The sequence is that of Monolignol oxidoreductase AtBBE-like 13 from Arabidopsis thaliana (Mouse-ear cress).